Consider the following 435-residue polypeptide: Serine--tRNA ligase (435 aa).

T242–E244 serves as a coordination point for L-serine. R273–E275 provides a ligand contact to ATP. E296 lines the L-serine pocket. An ATP-binding site is contributed by E360–S363. Residue S396 participates in L-serine binding.

It belongs to the class-II aminoacyl-tRNA synthetase family. Type-1 seryl-tRNA synthetase subfamily. In terms of assembly, homodimer. The tRNA molecule binds across the dimer.

It is found in the cytoplasm. It catalyses the reaction tRNA(Ser) + L-serine + ATP = L-seryl-tRNA(Ser) + AMP + diphosphate + H(+). The catalysed reaction is tRNA(Sec) + L-serine + ATP = L-seryl-tRNA(Sec) + AMP + diphosphate + H(+). It functions in the pathway aminoacyl-tRNA biosynthesis; selenocysteinyl-tRNA(Sec) biosynthesis; L-seryl-tRNA(Sec) from L-serine and tRNA(Sec): step 1/1. Functionally, catalyzes the attachment of serine to tRNA(Ser). Is also able to aminoacylate tRNA(Sec) with serine, to form the misacylated tRNA L-seryl-tRNA(Sec), which will be further converted into selenocysteinyl-tRNA(Sec). This Vibrio cholerae serotype O1 (strain ATCC 39541 / Classical Ogawa 395 / O395) protein is Serine--tRNA ligase.